The primary structure comprises 324 residues: tRNA pseudouridine synthase B (324 aa).

Asp-49 serves as the catalytic Nucleophile. Residues 87 to 107 (RSTDDLEGQPTKTSDKRPSRE) form a disordered region.

Belongs to the pseudouridine synthase TruB family. Type 1 subfamily.

It catalyses the reaction uridine(55) in tRNA = pseudouridine(55) in tRNA. Its function is as follows. Responsible for synthesis of pseudouridine from uracil-55 in the psi GC loop of transfer RNAs. This is tRNA pseudouridine synthase B from Brucella canis (strain ATCC 23365 / NCTC 10854 / RM-666).